Reading from the N-terminus, the 254-residue chain is L-arabinose 1-dehydrogenase (NAD(P)(+)) (254 aa).

Tyr142 acts as the Proton acceptor in catalysis. 2 residues coordinate NAD(+): Tyr142 and Lys146.

It belongs to the NAD(P)-dependent epimerase/dehydratase family. In terms of assembly, homotetramer.

The enzyme catalyses alpha-L-arabinopyanose + NAD(+) = L-arabinono-1,4-lactone + NADH + H(+). The catalysed reaction is alpha-L-arabinopyanose + NADP(+) = L-arabinono-1,4-lactone + NADPH + H(+). It participates in carbohydrate degradation; L-arabinose degradation via L-arabinono-1,4-lactone pathway. Functionally, L-AraDH initiates the degradation of L-arabinose. Catalyzes the NAD(P)(+)-dependent conversion of L-arabinose to L-arabino-gamma-lactone. It is highly specific for L-arabinose as substrate and can use both NADP(+) and NAD(+) as electron acceptor, with a slight preference for NADP(+). In Haloferax volcanii (strain ATCC 29605 / DSM 3757 / JCM 8879 / NBRC 14742 / NCIMB 2012 / VKM B-1768 / DS2) (Halobacterium volcanii), this protein is L-arabinose 1-dehydrogenase (NAD(P)(+)).